The following is a 270-amino-acid chain: PspA protein (270 aa).

The disordered stretch occupies residues Met238 to Gln270. Residues Gly240–Thr258 show a composition bias toward low complexity.

Belongs to the PspA/Vipp/IM30 family.

It is found in the cytoplasm. Its function is as follows. Involved in resistance to stress. Associates with and regulates lipid droplets (LDs) homeostasis under conditions of stress and may regulate non-replicating persistence (NRP). Could be involved in preservation of envelope integrity and tolerance to surface stress. This is PspA protein from Mycobacterium tuberculosis (strain ATCC 25177 / H37Ra).